The following is a 242-amino-acid chain: Probable derlin-1 homolog (242 aa).

Residues 1–18 lie on the Cytoplasmic side of the membrane; sequence MDGVKEWFNSIPPVSRYM. A helical transmembrane segment spans residues 19 to 39; sequence FAIFLGIPVLAAMHLISFNYL. At 40–98 the chain is on the lumenal side; sequence YLDFTFTFKHFHLWRLITAPCIISSLGPMFLFNLIFFYQYTTRLESLNYAGKSDDYLFC. A helical membrane pass occupies residues 99–119; it reads IIFISICNIIFGLIFEYYFLG. Topologically, residues 120–140 are cytoplasmic; the sequence is TMTIMSLIYIYSRMNPTGTSN. A helical transmembrane segment spans residues 141-161; the sequence is FYGFFSFKTIYLPWVFLVAHF. Residues 162-167 are Lumenal-facing; it reads LQTGHP. The chain crosses the membrane as a helical span at residues 168 to 188; it reads PYSDFLAIVSGHIFFYLTDIY. Residues 189–242 are Cytoplasmic-facing; it reads PRANGVPALIKTPKFITNIFNKGDRNPNNVRRDPRTGRPIQEGGYNWGQGHALG. Positions 214–224 are enriched in basic and acidic residues; sequence NPNNVRRDPRT. The tract at residues 214–242 is disordered; the sequence is NPNNVRRDPRTGRPIQEGGYNWGQGHALG. The segment covering 233-242 has biased composition (gly residues); the sequence is YNWGQGHALG.

It belongs to the derlin family.

Its subcellular location is the endoplasmic reticulum membrane. Functionally, may be involved in the degradation process of specific misfolded endoplasmic reticulum (ER) luminal proteins. May also involved in endoplasmic reticulum stress-induced pre-emptive quality control, a mechanism that selectively attenuates the translocation of newly synthesized proteins into the endoplasmic reticulum and reroutes them to the cytosol for proteasomal degradation. The protein is Probable derlin-1 homolog of Dictyostelium discoideum (Social amoeba).